The chain runs to 563 residues: Developmental regulatory protein wetA (563 aa).

2 stretches are compositionally biased toward polar residues: residues 54-69 (EQSP…THPS) and 160-175 (HKQS…SQFQ). Disordered regions lie at residues 54–81 (EQSP…SLPP), 112–176 (ASST…QFQK), 272–318 (SNNS…PDLQ), 334–356 (PQRQ…IQNT), 430–494 (PQLH…SPKG), and 516–538 (GVAP…DRRR). The span at 272–305 (SNNSTVTSSPPSADDIFPSPHSSDPQSMSSWHSD) shows a compositional bias: low complexity. Residues 430 to 441 (PQLHPQSRSPSL) are compositionally biased toward polar residues.

The protein belongs to the wetA family.

Its function is as follows. BrlA, abaA and wetA are pivotal regulators of conidiophore development and conidium maturation. They act individually and together to regulate their own expression and that of numerous other sporulation-specific genes. The protein is Developmental regulatory protein wetA of Aspergillus oryzae (strain ATCC 42149 / RIB 40) (Yellow koji mold).